The sequence spans 598 residues: Phenylalanine--tRNA ligase beta subunit, cytoplasmic (598 aa).

The B5 domain occupies 303–383 (LAVYDMEVPL…IAYGFNNIPT (81 aa)). Mg(2+)-binding residues include Asp-361, Asp-367, Glu-370, and Asp-371.

Belongs to the phenylalanyl-tRNA synthetase beta subunit family. Type 2 subfamily. In terms of assembly, tetramer of two alpha and two beta subunits. Mg(2+) serves as cofactor.

The protein resides in the cytoplasm. Its subcellular location is the cytosol. It catalyses the reaction tRNA(Phe) + L-phenylalanine + ATP = L-phenylalanyl-tRNA(Phe) + AMP + diphosphate + H(+). This chain is Phenylalanine--tRNA ligase beta subunit, cytoplasmic, found in Arabidopsis thaliana (Mouse-ear cress).